A 392-amino-acid chain; its full sequence is Selenide, water dikinase 1 (392 aa).

Cysteine 31 is an active-site residue. Residues lysine 32, 67 to 69, aspartate 87, aspartate 110, and 161 to 164 each bind ATP; these read GMD and GGQT. Aspartate 69 serves as a coordination point for Mg(2+). A Mg(2+)-binding site is contributed by aspartate 110. Aspartate 265 provides a ligand contact to Mg(2+).

Belongs to the selenophosphate synthase 1 family. Class II subfamily. In terms of assembly, homodimer. It depends on Mg(2+) as a cofactor.

The protein resides in the cell membrane. It localises to the nucleus membrane. The enzyme catalyses hydrogenselenide + ATP + H2O = selenophosphate + AMP + phosphate + 2 H(+). Its function is as follows. Synthesizes selenophosphate from selenide and ATP. The chain is Selenide, water dikinase 1 (sephs1) from Xenopus tropicalis (Western clawed frog).